The sequence spans 469 residues: Ribulose bisphosphate carboxylase large chain (469 aa).

Substrate contacts are provided by Asn115 and Thr165. The active-site Proton acceptor is Lys167. Lys169 is a substrate binding site. Mg(2+) contacts are provided by Lys193, Asp195, and Glu196. The residue at position 193 (Lys193) is an N6-carboxylysine. The active-site Proton acceptor is the His286. Residues Arg287, His319, and Ser371 each coordinate substrate.

The protein belongs to the RuBisCO large chain family. Type I subfamily. Heterohexadecamer of 8 large chains and 8 small chains. The cofactor is Mg(2+).

It is found in the plastid. The protein resides in the organellar chromatophore. The enzyme catalyses 2 (2R)-3-phosphoglycerate + 2 H(+) = D-ribulose 1,5-bisphosphate + CO2 + H2O. It carries out the reaction D-ribulose 1,5-bisphosphate + O2 = 2-phosphoglycolate + (2R)-3-phosphoglycerate + 2 H(+). RuBisCO catalyzes two reactions: the carboxylation of D-ribulose 1,5-bisphosphate, the primary event in carbon dioxide fixation, as well as the oxidative fragmentation of the pentose substrate. Both reactions occur simultaneously and in competition at the same active site. In Paulinella chromatophora, this protein is Ribulose bisphosphate carboxylase large chain.